The primary structure comprises 303 residues: Major fimbrium anchoring subunit FimB (303 aa).

An N-terminal signal peptide occupies residues Met1–Gly22. Cys23 is lipidated: N-palmitoyl cysteine. Residue Cys23 is the site of S-diacylglycerol cysteine attachment.

Belongs to the bacteroidetes fimbrillin superfamily. FimB/Mfa2 family. FimB is not part of the fimbrium itself, but anchors the fimbrium in the outer membrane. Linear, head-to-tail oligomerization of fimbrial subunits mediates assembly of the fimbrium stalk, while the minor components FimC, FimD and FimE probably form the fimbrium tip. The anchoring subunit FimB limits fimbrium length and is important for solid fimbrium attachment to the outer membrane. In its absence, the major fimbriae become very long and are easily detached from the membrane.

Its subcellular location is the cell outer membrane. Functionally, anchoring subunit of the major fimbriae. Regulates fimbrial length. These filamentous pili are attached to the cell surface; they mediate biofilm formation, adhesion onto host cells and onto other bacteria that are part of the oral microbiome. Fimbriae of P.gingivalis are major virulence factors. The protein is Major fimbrium anchoring subunit FimB of Porphyromonas gingivalis (strain ATCC BAA-308 / W83).